We begin with the raw amino-acid sequence, 423 residues long: Aspartate--tRNA(Asp) ligase (423 aa).

E163 contacts L-aspartate. The aspartate stretch occupies residues 185-188 (QLYK). An L-aspartate-binding site is contributed by R207. Residues 207-209 (RAE), 215-217 (RHL), and E346 each bind ATP. Mg(2+) contacts are provided by E346 and S349. L-aspartate-binding residues include S349 and R353. An ATP-binding site is contributed by 394–397 (GLER).

Belongs to the class-II aminoacyl-tRNA synthetase family. Type 2 subfamily. In terms of assembly, homodimer. Mg(2+) serves as cofactor.

It is found in the cytoplasm. The enzyme catalyses tRNA(Asp) + L-aspartate + ATP = L-aspartyl-tRNA(Asp) + AMP + diphosphate. Its function is as follows. Catalyzes the attachment of L-aspartate to tRNA(Asp) in a two-step reaction: L-aspartate is first activated by ATP to form Asp-AMP and then transferred to the acceptor end of tRNA(Asp). The sequence is that of Aspartate--tRNA(Asp) ligase from Picrophilus torridus (strain ATCC 700027 / DSM 9790 / JCM 10055 / NBRC 100828 / KAW 2/3).